The primary structure comprises 164 residues: Succinate dehydrogenase assembly factor 2, mitochondrial (164 aa).

Belongs to the SDHAF2 family. In terms of assembly, interacts with the flavoprotein subunit within the SDH catalytic dimer.

The protein localises to the mitochondrion matrix. Its function is as follows. Plays an essential role in the assembly of succinate dehydrogenase (SDH), an enzyme complex (also referred to as respiratory complex II) that is a component of both the tricarboxylic acid (TCA) cycle and the mitochondrial electron transport chain, and which couples the oxidation of succinate to fumarate with the reduction of ubiquinone (coenzyme Q) to ubiquinol. Required for flavinylation (covalent attachment of FAD) of the flavoprotein subunit of the SDH catalytic dimer. This Lodderomyces elongisporus (strain ATCC 11503 / CBS 2605 / JCM 1781 / NBRC 1676 / NRRL YB-4239) (Yeast) protein is Succinate dehydrogenase assembly factor 2, mitochondrial.